The chain runs to 77 residues: Liver-expressed antimicrobial peptide 2 (77 aa).

Residues 1–22 form the signal peptide; it reads MWHLKLCAVLMIFLLLLGQTDG. A propeptide spanning residues 23–37 is cleaved from the precursor; that stretch reads SPIPEVSSAKRRPRR. Cystine bridges form between C54-C65 and C60-C70.

It belongs to the LEAP2 family.

It is found in the secreted. Its function is as follows. Has an antimicrobial activity. The sequence is that of Liver-expressed antimicrobial peptide 2 (LEAP2) from Macaca mulatta (Rhesus macaque).